The following is a 173-amino-acid chain: Lipoprotein signal peptidase (173 aa).

The next 2 helical transmembrane spans lie at 67–87 and 92–112; these read WISL…PHLG and MGFG…FAFG. Residues Asp116 and Asp132 contribute to the active site. The helical transmembrane segment at 125–145 threads the bilayer; it reads FPVFNGADIAINLGLACLLIG. The tract at residues 151–173 is disordered; that stretch reads SRTPAPARPASKQIREPTDTTGG. Basic and acidic residues predominate over residues 163–173; that stretch reads QIREPTDTTGG.

The protein belongs to the peptidase A8 family.

It is found in the cell inner membrane. It catalyses the reaction Release of signal peptides from bacterial membrane prolipoproteins. Hydrolyzes -Xaa-Yaa-Zaa-|-(S,diacylglyceryl)Cys-, in which Xaa is hydrophobic (preferably Leu), and Yaa (Ala or Ser) and Zaa (Gly or Ala) have small, neutral side chains.. It functions in the pathway protein modification; lipoprotein biosynthesis (signal peptide cleavage). In terms of biological role, this protein specifically catalyzes the removal of signal peptides from prolipoproteins. The sequence is that of Lipoprotein signal peptidase from Gloeobacter violaceus (strain ATCC 29082 / PCC 7421).